We begin with the raw amino-acid sequence, 383 residues long: uncharacterized protein (383 aa).

This sequence belongs to the peptidase M20 family.

This is an uncharacterized protein from Staphylococcus aureus (strain MRSA252).